A 395-amino-acid chain; its full sequence is Tryptophan synthase beta chain (395 aa).

Lysine 86 carries the post-translational modification N6-(pyridoxal phosphate)lysine.

Belongs to the TrpB family. In terms of assembly, tetramer of two alpha and two beta chains. Pyridoxal 5'-phosphate is required as a cofactor.

It carries out the reaction (1S,2R)-1-C-(indol-3-yl)glycerol 3-phosphate + L-serine = D-glyceraldehyde 3-phosphate + L-tryptophan + H2O. Its pathway is amino-acid biosynthesis; L-tryptophan biosynthesis; L-tryptophan from chorismate: step 5/5. In terms of biological role, the beta subunit is responsible for the synthesis of L-tryptophan from indole and L-serine. The sequence is that of Tryptophan synthase beta chain from Pseudoalteromonas atlantica (strain T6c / ATCC BAA-1087).